Reading from the N-terminus, the 489-residue chain is Mitochondrial distribution and morphology protein 10 (489 aa).

This sequence belongs to the MDM10 family. Component of the ER-mitochondria encounter structure (ERMES) or MDM complex, composed of MMM1, MDM10, MDM12 and MDM34. Associates with the mitochondrial outer membrane sorting assembly machinery SAM(core) complex.

The protein resides in the mitochondrion outer membrane. Component of the ERMES/MDM complex, which serves as a molecular tether to connect the endoplasmic reticulum and mitochondria. Components of this complex are involved in the control of mitochondrial shape and protein biogenesis and may function in phospholipid exchange. MDM10 is involved in the late assembly steps of the general translocase of the mitochondrial outer membrane (TOM complex). Functions in the TOM40-specific route of the assembly of outer membrane beta-barrel proteins, including the association of TOM40 with the receptor TOM22 and small TOM proteins. Can associate with the SAM(core) complex as well as the MDM12-MMM1 complex, both involved in late steps of the major beta-barrel assembly pathway, that is responsible for biogenesis of all outer membrane beta-barrel proteins. May act as a switch that shuttles between both complexes and channels precursor proteins into the TOM40-specific pathway. Plays a role in mitochondrial morphology and in the inheritance of mitochondria. The sequence is that of Mitochondrial distribution and morphology protein 10 from Arthroderma otae (strain ATCC MYA-4605 / CBS 113480) (Microsporum canis).